Consider the following 659-residue polypeptide: Chaperone protein DnaK (659 aa).

Position 201 is a phosphothreonine; by autocatalysis (T201). A compositionally biased stretch (basic and acidic residues) spans 571 to 592 (RSALKEDAPTEKIKEASDELSR). The interval 571 to 659 (RSALKEDAPT…DVEIVDKPND (89 aa)) is disordered. Low complexity predominate over residues 600 to 613 (AMQSQSASAAANAQ).

The protein belongs to the heat shock protein 70 family.

Its function is as follows. Acts as a chaperone. This is Chaperone protein DnaK from Chlamydia abortus (strain DSM 27085 / S26/3) (Chlamydophila abortus).